The sequence spans 241 residues: Carboxy-S-adenosyl-L-methionine synthase (241 aa).

Residues tyrosine 38, 63-65, 88-89, 116-117, asparagine 131, and arginine 198 each bind S-adenosyl-L-methionine; these read GCS, DN, and DI.

It belongs to the class I-like SAM-binding methyltransferase superfamily. Cx-SAM synthase family. In terms of assembly, homodimer.

It catalyses the reaction prephenate + S-adenosyl-L-methionine = carboxy-S-adenosyl-L-methionine + 3-phenylpyruvate + H2O. In terms of biological role, catalyzes the conversion of S-adenosyl-L-methionine (SAM) to carboxy-S-adenosyl-L-methionine (Cx-SAM). This is Carboxy-S-adenosyl-L-methionine synthase from Actinobacillus pleuropneumoniae serotype 7 (strain AP76).